Here is a 396-residue protein sequence, read N- to C-terminus: Major outer membrane porin, serovar A (396 aa).

Residues 1-22 (MKKLLKSVLVFAALSSASSLQA) form the signal peptide.

This sequence belongs to the chlamydial porin (CP) (TC 1.B.2) family. In terms of assembly, part of a disulfide cross-linked outer membrane complex (COMC) composed of the major outer membrane porin (MOMP), the small cysteine-rich protein (OmcA) and the large cysteine-rich periplasmic protein (OmcB).

The protein resides in the cell outer membrane. Functionally, in elementary bodies (EBs, the infectious stage, which is able to survive outside the host cell) provides the structural integrity of the outer envelope through disulfide cross-links with the small cysteine-rich protein and the large cysteine-rich periplasmic protein. It has been described in publications as the Sarkosyl-insoluble COMC (Chlamydia outer membrane complex), and serves as the functional equivalent of peptidoglycan. Its function is as follows. Permits diffusion of specific solutes through the outer membrane. The sequence is that of Major outer membrane porin, serovar A (ompA) from Chlamydia trachomatis.